A 186-amino-acid chain; its full sequence is Large ribosomal subunit protein uL5m (186 aa).

It belongs to the universal ribosomal protein uL5 family.

The protein localises to the mitochondrion. The sequence is that of Large ribosomal subunit protein uL5m (RPL5) from Solanum tuberosum (Potato).